The following is a 285-amino-acid chain: MAQSEVDSVDCVTSDRDGDIGNQSDDSSNSSLFKTQCVPSPTRKQRIPTVKCVPSLASVETDSSSDSSLEPRPLTLKAIFERFKKKKRKKRKKRKYKPKLRRQGRPSGTRNIRRSQIDAKQIKDKGAVFPFLESESGRKTLPWKKILTYEQAVARGFFHHIEKLKYEHHLKECLSQMHAGEDLEKEDFDSRRHKYMDDDGPLSPIEEPSTEDEATDPQSECDIKLVEDSCFIISTEFPRKRNLEQGKIKKESAFSKKSKAKDATQRGNRRSWKGGEHACLHSEVS.

2 disordered regions span residues 1–49 and 85–112; these read MAQS…RIPT and KKKR…TRNI. Polar residues predominate over residues 21 to 39; sequence GNQSDDSSNSSLFKTQCVP. Ser24 is modified (phosphoserine). The segment covering 85 to 104 has biased composition (basic residues); that stretch reads KKKRKKRKKRKYKPKLRRQG. Residue Ser134 is modified to Phosphoserine. Positions 193–219 are disordered; sequence HKYMDDDGPLSPIEEPSTEDEATDPQS. The residue at position 229 (Ser229) is a Phosphoserine. 2 stretches are compositionally biased toward basic and acidic residues: residues 242 to 264 and 273 to 285; these read NLEQ…KDAT and KGGE…SEVS. A disordered region spans residues 242 to 285; sequence NLEQGKIKKESAFSKKSKAKDATQRGNRRSWKGGEHACLHSEVS.

As to quaternary structure, component of the transcription factor SL1/TIF-IB complex, composed of TBP and at least TAF1A, TAF1B, TAF1C and TAF1D. Interacts with UBTF.

The protein localises to the nucleus. Component of the transcription factor SL1/TIF-IB complex, which is involved in the assembly of the PIC (preinitiation complex) during RNA polymerase I-dependent transcription. The rate of PIC formation probably is primarily dependent on the rate of association of SL1/TIF-IB with the rDNA promoter. SL1/TIF-IB is involved in stabilization of nucleolar transcription factor 1/UBTF on rDNA. Formation of SL1/TIF-IB excludes the association of TBP with TFIID subunits. The sequence is that of TATA box-binding protein-associated factor RNA polymerase I subunit D (Taf1d) from Rattus norvegicus (Rat).